Reading from the N-terminus, the 413-residue chain is Clusterin-associated protein 1 (413 aa).

Residues methionine 185 to serine 308 adopt a coiled-coil conformation. Residues lysine 303–phenylalanine 413 form a disordered region. Acidic residues-rich tracts occupy residues aspartate 312 to leucine 328 and aspartate 360 to serine 388. A phosphoserine mark is found at serine 314, serine 324, and serine 326. Serine 409 carries the post-translational modification Phosphoserine.

This sequence belongs to the CLUAP1 family. As to quaternary structure, interacts with CLU/clusterin. Interacts with UBXN10; the interaction is direct. Expressed in all tissues tested including heart, kidney, skeletal muscle, eye, liver, ovary, oviduct, testes, lung and brain. Elevated levels in multiciliated cells such as the bronchioles of the lungs, ependymal cells of the brain and cells with a single primary cilia of heart and kidney.

Its subcellular location is the cell projection. It localises to the cilium. The protein resides in the nucleus. In terms of biological role, required for cilia biogenesis. Appears to function within the multiple intraflagellar transport complex B (IFT-B). Key regulator of hedgehog signaling. The chain is Clusterin-associated protein 1 (Cluap1) from Mus musculus (Mouse).